Reading from the N-terminus, the 353-residue chain is Protein-glutamate methylesterase/protein-glutamine glutaminase (353 aa).

Positions 6–123 (RVLVIDDSAL…ARGLKAMLSE (118 aa)) constitute a Response regulatory domain. Asp57 bears the 4-aspartylphosphate mark. One can recognise a CheB-type methylesterase domain in the interval 159 to 351 (AESTDKVIAI…PRIVDLLSER (193 aa)). Catalysis depends on residues Ser171, His197, and Asp293.

Belongs to the CheB family. Post-translationally, phosphorylated by CheA. Phosphorylation of the N-terminal regulatory domain activates the methylesterase activity.

The protein localises to the cytoplasm. The enzyme catalyses [protein]-L-glutamate 5-O-methyl ester + H2O = L-glutamyl-[protein] + methanol + H(+). It carries out the reaction L-glutaminyl-[protein] + H2O = L-glutamyl-[protein] + NH4(+). In terms of biological role, involved in chemotaxis. Part of a chemotaxis signal transduction system that modulates chemotaxis in response to various stimuli. Catalyzes the demethylation of specific methylglutamate residues introduced into the chemoreceptors (methyl-accepting chemotaxis proteins or MCP) by CheR. Also mediates the irreversible deamidation of specific glutamine residues to glutamic acid. The polypeptide is Protein-glutamate methylesterase/protein-glutamine glutaminase (Syntrophotalea carbinolica (strain DSM 2380 / NBRC 103641 / GraBd1) (Pelobacter carbinolicus)).